The chain runs to 322 residues: Acetyl-coenzyme A carboxylase carboxyl transferase subunit alpha (322 aa).

Residues 39–293 (RLASKSQQLT…KRALAESLRQ (255 aa)) form the CoA carboxyltransferase C-terminal domain.

The protein belongs to the AccA family. In terms of assembly, acetyl-CoA carboxylase is a heterohexamer composed of biotin carboxyl carrier protein (AccB), biotin carboxylase (AccC) and two subunits each of ACCase subunit alpha (AccA) and ACCase subunit beta (AccD).

Its subcellular location is the cytoplasm. It carries out the reaction N(6)-carboxybiotinyl-L-lysyl-[protein] + acetyl-CoA = N(6)-biotinyl-L-lysyl-[protein] + malonyl-CoA. It participates in lipid metabolism; malonyl-CoA biosynthesis; malonyl-CoA from acetyl-CoA: step 1/1. In terms of biological role, component of the acetyl coenzyme A carboxylase (ACC) complex. First, biotin carboxylase catalyzes the carboxylation of biotin on its carrier protein (BCCP) and then the CO(2) group is transferred by the carboxyltransferase to acetyl-CoA to form malonyl-CoA. The sequence is that of Acetyl-coenzyme A carboxylase carboxyl transferase subunit alpha from Ralstonia pickettii (strain 12J).